Here is a 413-residue protein sequence, read N- to C-terminus: Putative syntaxin-5 (413 aa).

Residues 1–391 (MSDFHNIRSR…RYLQNISKNR (391 aa)) are Cytoplasmic-facing. A disordered region spans residues 257-290 (KNRRDKFSSGAAVPMGLPSSSSGANVRSKLLQDD). A t-SNARE coiled-coil homology domain is found at 321–383 (LEYAQARSNT…DMAHSELVRY (63 aa)). A helical; Anchor for type IV membrane protein membrane pass occupies residues 392-412 (WLMIQVFGVLMVFFVVFVLFL). Threonine 413 is a topological domain (extracellular).

It belongs to the syntaxin family.

It is found in the membrane. Its function is as follows. Potentially involved in docking of synaptic vesicles at presynaptic active zones. This is Putative syntaxin-5 (syx-5) from Caenorhabditis elegans.